Consider the following 591-residue polypeptide: Formate--tetrahydrofolate ligase (591 aa).

74–81 (TPLGEGKS) provides a ligand contact to ATP.

The protein belongs to the formate--tetrahydrofolate ligase family.

The catalysed reaction is (6S)-5,6,7,8-tetrahydrofolate + formate + ATP = (6R)-10-formyltetrahydrofolate + ADP + phosphate. The protein operates within one-carbon metabolism; tetrahydrofolate interconversion. The sequence is that of Formate--tetrahydrofolate ligase from Lawsonia intracellularis (strain PHE/MN1-00).